The primary structure comprises 333 residues: Electron transfer flavoprotein subunit alpha, mitochondrial (333 aa).

The transit peptide at 1–19 (MFRAAAPGQLRRAASLLRF) directs the protein to the mitochondrion. Residues 20–204 (QSTLVIAEHA…EISEWLDQKL (185 aa)) are domain I. Residue K59 is modified to N6-acetyllysine; alternate. Residue K59 is modified to N6-succinyllysine; alternate. K62 carries the post-translational modification N6-acetyllysine. Residue K69 is modified to N6-acetyllysine; alternate. At K69 the chain carries N6-succinyllysine; alternate. Residue K75 is modified to N6-acetyllysine. T93 is subject to Phosphothreonine. N6-acetyllysine occurs at positions 101 and 139. The residue at position 140 (S140) is a Phosphoserine. The residue at position 158 (K158) is an N6-acetyllysine; alternate. The residue at position 158 (K158) is an N6-succinyllysine; alternate. K164 bears the N6-acetyllysine mark. An N6-succinyllysine modification is found at K187. K203 carries the N6-acetyllysine; alternate modification. An N6-succinyllysine; alternate modification is found at K203. Residues 205 to 333 (TKSDRPELTG…PEMTEILKKK (129 aa)) are domain II. K216 is subject to N6-succinyllysine. Residue R223 coordinates FAD. An N6-acetyllysine; alternate mark is found at K226 and K232. 2 positions are modified to N6-succinyllysine; alternate: K226 and K232. FAD is bound by residues S248, 263 to 266 (VGQT), 281 to 286 (SGAIQH), and N300. The residue at position 301 (K301) is an N6-succinyllysine. An FAD-binding site is contributed by 318–319 (DL).

This sequence belongs to the ETF alpha-subunit/FixB family. Heterodimer composed of ETFA and ETFB. Identified in a complex that contains ETFA, ETFB and ETFRF1. Interaction with ETFRF1 promotes dissociation of the bound FAD and loss of electron transfer activity. Interacts with TASOR. FAD is required as a cofactor.

Its subcellular location is the mitochondrion matrix. Heterodimeric electron transfer flavoprotein that accepts electrons from several mitochondrial dehydrogenases, including acyl-CoA dehydrogenases, glutaryl-CoA and sarcosine dehydrogenase. It transfers the electrons to the main mitochondrial respiratory chain via ETF-ubiquinone oxidoreductase (ETF dehydrogenase). Required for normal mitochondrial fatty acid oxidation and normal amino acid metabolism. The polypeptide is Electron transfer flavoprotein subunit alpha, mitochondrial (ETFA) (Pongo abelii (Sumatran orangutan)).